A 33-amino-acid polypeptide reads, in one-letter code: Brevinin-2PTd (33 aa).

Cysteine 27 and cysteine 33 are disulfide-bonded.

Expressed by the skin glands.

It localises to the secreted. In terms of biological role, has antibacterial activity against the Gram-positive bacterium S.aureus ATCC 25923 and the Gram-negative bacterium E.coli ATCC 25726. This Pulchrana picturata (Malaysian fire frog) protein is Brevinin-2PTd.